The following is a 486-amino-acid chain: Shutoff alkaline exonuclease (486 aa).

The protein belongs to the herpesviridae alkaline nuclease family. Forms a complex with the DNA polymerase, the DNA polymerase processivity factor, and the major DNA binding protein.

It is found in the host nucleus. Its subcellular location is the host cytoplasm. Plays a role in processing non linear or branched viral DNA intermediates in order to promote the production of mature packaged unit-length linear progeny viral DNA molecules. Exhibits endonuclease and exonuclease activities and accepts both double-stranded and single-stranded DNA as substrate. Exonuclease digestion of DNA is in the 5'-&gt; 3' direction and the products are 5'-monophosphate nucleosides. Additionally, forms a recombinase with the major DNA-binding protein, which displays strand exchange activity. Also acts as a cytoplasmic RNA endonuclease that induces degradation of the majority of the cellular messenger RNAs during early lytic infection. The resulting inhibition of cellular protein synthesis serves to ensure maximal viral gene expression and evasion from host immune response. Internally cleaves host mRNAs which are then degraded by the cellular exonuclease XRN1. Bypasses therefore the regulatory steps of deadenylation and decapping normally required for XRN1 activation. In addition, inhibits host inflammasome activation to promote viral lytic replication by interacting with host AIM2 and disrupting its polymerization. This chain is Shutoff alkaline exonuclease (ORF37), found in Human herpesvirus 8 type P (isolate GK18) (HHV-8).